A 436-amino-acid polypeptide reads, in one-letter code: Na(+)/H(+) antiporter NhaA (436 aa).

11 consecutive transmembrane segments (helical) span residues 14 to 34 (AGGI…NSTW), 59 to 79 (LHHW…GLEL), 95 to 115 (ALPV…YHQF), 125 to 145 (WGIP…LLAW), 152 to 172 (IIFL…VIAI), 176 to 196 (PALH…LLLF), 214 to 234 (FWYF…FLAF), 300 to 320 (AIQP…NAGI), 336 to 356 (IGTC…SSWL), 374 to 394 (LLGA…IGQL), and 407 to 427 (LGIL…LFQV).

Belongs to the NhaA Na(+)/H(+) (TC 2.A.33) antiporter family.

It is found in the cell inner membrane. The catalysed reaction is Na(+)(in) + 2 H(+)(out) = Na(+)(out) + 2 H(+)(in). Functionally, na(+)/H(+) antiporter that extrudes sodium in exchange for external protons. In Acidithiobacillus ferrooxidans (strain ATCC 23270 / DSM 14882 / CIP 104768 / NCIMB 8455) (Ferrobacillus ferrooxidans (strain ATCC 23270)), this protein is Na(+)/H(+) antiporter NhaA.